The sequence spans 402 residues: Acetate kinase (402 aa).

Asparagine 10 is a binding site for Mg(2+). Lysine 17 is an ATP binding site. Residue arginine 89 coordinates substrate. Aspartate 148 serves as the catalytic Proton donor/acceptor. Residues 208 to 212 (HLGNG), 283 to 285 (DCR), and 334 to 338 (GIGEN) contribute to the ATP site. Glutamate 389 serves as a coordination point for Mg(2+).

The protein belongs to the acetokinase family. As to quaternary structure, homodimer. Mg(2+) serves as cofactor. It depends on Mn(2+) as a cofactor.

The protein localises to the cytoplasm. It catalyses the reaction acetate + ATP = acetyl phosphate + ADP. The protein operates within metabolic intermediate biosynthesis; acetyl-CoA biosynthesis; acetyl-CoA from acetate: step 1/2. Functionally, catalyzes the formation of acetyl phosphate from acetate and ATP. Can also catalyze the reverse reaction. The protein is Acetate kinase of Actinobacillus pleuropneumoniae serotype 7 (strain AP76).